The following is a 286-amino-acid chain: Nucleotide-binding protein APL_0334 (286 aa).

8–15 is an ATP binding site; that stretch reads GRSGSGKS. 56 to 59 is a GTP binding site; the sequence is DIRN.

The protein belongs to the RapZ-like family.

Functionally, displays ATPase and GTPase activities. This Actinobacillus pleuropneumoniae serotype 5b (strain L20) protein is Nucleotide-binding protein APL_0334.